The chain runs to 803 residues: 3',5'-cyclic-AMP phosphodiesterase 4D (803 aa).

Residues 1 to 103 (MEAEGSSVPA…SGASRVRHRG (103 aa)) are disordered. Phosphoserine is present on residues His-52 and His-56. Positions 58-85 (PPPPPPSPQPQLQPPPPPPLPPPPPPPG) are enriched in pro residues. 5 positions are modified to phosphoserine: Ser-137, Ser-294, Ser-296, Ser-343, and Ser-370. Residues 338-358 (EVEIPSPTQKEKEKKKRPMSQ) are disordered. Positions 381–710 (VKTEQEDVLA…EWYQSTIPQS (330 aa)) constitute a PDEase domain. A Glycyl lysine isopeptide (Lys-Gly) (interchain with G-Cter in SUMO) cross-link involves residue Lys-382. His-457 functions as the Proton donor in the catalytic mechanism. A 3',5'-cyclic AMP-binding site is contributed by His-457. An AMP-binding site is contributed by His-457. Zn(2+) is bound by residues His-461, His-497, Asp-498, and Asp-615. 5 residues coordinate AMP: Asp-498, Asp-615, Asn-618, Gln-666, and Phe-669. Position 498 (Asp-498) interacts with Mg(2+). Asp-498 lines the Mn(2+) pocket. Positions 666 and 669 each coordinate 3',5'-cyclic AMP. 2 disordered regions span residues 705–724 (STIPQSPSPAPDDQEDGRQG) and 732–803 (ELTL…CPDT). Residues 757–768 (CSDSKTLCTQDS) are compositionally biased toward polar residues. A compositionally biased stretch (acidic residues) spans 774 to 789 (PLDEQVEEEAVAEEES).

Belongs to the cyclic nucleotide phosphodiesterase family. PDE4 subfamily. As to quaternary structure, homodimer for the long isoforms. Isoforms with truncated N-termini are monomeric. Binds ARRB2. Isoform 33 is part of a ternary complex containing PRKAR2A, PRKAR2B and AKAP9. Identified in a complex composed of RYR1, PDE4D, PKA, FKBP1A and protein phosphatase 1 (PP1). Interacts with PDE4DIP. Isoform 5 interacts (via N-terminal region) with SHANK2 (via proline-rich region); the interaction is increased in a PKA-dependent manner. Isoform 33, isoform 4, isoform 7, isoform 8 and isoform 9 but not isoform 32 and isoform 6 interact with SHANK2. Isoform 31 interacts weakly with SHANK2. Requires Zn(2+) as cofactor. It depends on Mg(2+) as a cofactor. The cofactor is Mn(2+). Isoform 1 and isoform 9 are rapidly activated by PKA through phosphorylation. Long isoforms that share a conserved PKA phosphorylation site in the N-terminus are also activated. In terms of processing, sumoylation of long isoforms by PIAS4 augments their activation by PKA phosphorylation and represses their inhibition by ERK phosphorylation. As to expression, expressed in epithelial cells. Isoform 33, isoform 4, isoform 5 and isoform 9 are expressed in brain. Isoform 33, isoform 5, isoform 8 and isoform 9 are expressed in heart (at protein level). Isoform 4 and isoform 6 are strongly expressed in cortex and cerebellum. Isoform 7 is strongly expressed in cortex and testis; weakly expressed in kidney, lung, spleen and cerebellum. Isoform 8 is strongly expressed in lung, heart and liver. Isoform 31, isoform 32, isoform 33, isoform 5 and isoform 9 are widely distributed.

The protein localises to the apical cell membrane. Its subcellular location is the cytoplasm. It is found in the membrane. It localises to the cytoskeleton. The protein resides in the microtubule organizing center. The protein localises to the centrosome. It carries out the reaction 3',5'-cyclic AMP + H2O = AMP + H(+). The protein operates within purine metabolism; 3',5'-cyclic AMP degradation; AMP from 3',5'-cyclic AMP: step 1/1. With respect to regulation, activated by phosphatidic acid. Inhibited by rolipram. Hydrolyzes the second messenger cAMP, which is a key regulator of many important physiological processes. This Rattus norvegicus (Rat) protein is 3',5'-cyclic-AMP phosphodiesterase 4D (Pde4d).